The sequence spans 207 residues: MKFSIIALALAVAFVCVAESRSEEEGYDVSEEIQAEELEEAERGGIDRKLMEVVNNLRKVQGREDSEEAGRGGINRKLMEMVNNLRKVQGREDSEEAGRGGINRKLMEMVNNLRKVQGREDSEEAGRGGINRKLMEMVNNLRKVQGREDSEEAGRGGINRKLMEMVNNLRKVQGREDTEEARGLKDKFKSMGEKLKQYIQTWKAKFG.

Residues 1–22 (MKFSIIALALAVAFVCVAESRS) form the signal peptide. Residues 23–43 (EEEGYDVSEEIQAEELEEAER) constitute a propeptide that is removed on maturation. A Processing quadruplet motif 1 motif is present at residues 40–43 (EAER). At Q61 the chain carries Glutamine amide. Positions 63 to 66 (REDS) match the Inverted processing quadruplet motif 1 motif. Residues 63–71 (REDSEEAGR) constitute a propeptide that is removed on maturation. The Processing quadruplet motif 2 motif lies at 68-71 (EAGR). At Q89 the chain carries Glutamine amide. The Inverted processing quadruplet motif 2 signature appears at 91-94 (REDS). The propeptide occupies 91–99 (REDSEEAGR). A Processing quadruplet motif 3 motif is present at residues 96 to 99 (EAGR). At Q117 the chain carries Glutamine amide. Positions 119–122 (REDS) match the Inverted processing quadruplet motif 3 motif. Positions 119–127 (REDSEEAGR) are excised as a propeptide. The short motif at 124–127 (EAGR) is the Processing quadruplet motif 4 element. At Q145 the chain carries Glutamine amide. Residues 147–150 (REDS) carry the Inverted processing quadruplet motif 4 motif. Residues 147-155 (REDSEEAGR) constitute a propeptide that is removed on maturation. A Processing quadruplet motif 5 motif is present at residues 152-155 (EAGR). At Q173 the chain carries Glutamine amide. The Inverted processing quadruplet motif 5 motif lies at 175-178 (REDT). A propeptide spanning residues 175–182 (REDTEEAR) is cleaved from the precursor. Residues 179–182 (EEAR) carry the Processing quadruplet motif 6 motif. The residue at position 206 (F206) is a Phenylalanine amide.

This sequence belongs to the cationic peptide 03 (latarcin) family. 04 subfamily. Cleavage of the propeptide depends on the processing quadruplet motif (PQM) (XXXR, with at least one of X being E) and the inverted PQM (RXXX, with at least one of X being E). Expressed by the venom gland.

It is found in the secreted. In terms of biological role, M-zodatoxin-Lt4a: Has antimicrobial activity against Gram-positive bacteria (A.globiformis VKM Ac-1112 (MIC=0.3 uM), and B.subtilis VKM B-501 (MIC=1.1 uM)), Gram-negative bacteria (E.coli DH5-alpha (MIC=4.5 uM), E.coli MH1 (MIC=3.2 uM), and P.aeruginosa PAO1 (MIC&gt;35 uM)), and yeasts (P.pastoris GS115 (MIC=36 uM), and S.cerevisiae Y190 (MIC=18 uM)). Does not have hemolytic activity against rabbit erythrocytes. Causes paralysis, but is not lethal when injected into insect (M.domestica) larvae. Shows no antimicrobial activity against Gram-positive bacterium B.subtilis B-501 or Gram-negative bacterium E.coli DH5-alpha at concentrations up to 20 uM. Its function is as follows. Shows no antimicrobial activity against Gram-positive bacterium B.subtilis B-501 or Gram-negative bacterium E.coli DH5-alpha at concentrations up to 20 uM. Shows no toxicity towards insect (S.carnaria) larvae. The polypeptide is M-zodatoxin-Lt4a (Lachesana tarabaevi (Spider)).